Reading from the N-terminus, the 155-residue chain is Ferredoxin-6, chloroplastic (155 aa).

Residues 1 to 58 (MSTATAPRLPAPRSGASYHYQTTAAPAANTLSFAGHARQAARASGPRLSSRFVASAAA) constitute a chloroplast transit peptide. A 2Fe-2S ferredoxin-type domain is found at 61–152 (HKVKLVGPDG…DCVIHTHKEE (92 aa)). The [2Fe-2S] cluster site is built by Cys98, Cys103, Cys106, and Cys136.

The protein belongs to the 2Fe2S plant-type ferredoxin family. [2Fe-2S] cluster serves as cofactor.

Its subcellular location is the plastid. The protein resides in the chloroplast. Its function is as follows. Ferredoxins are iron-sulfur proteins that transfer electrons in a wide variety of metabolic reactions. This chain is Ferredoxin-6, chloroplastic (FDX6), found in Zea mays (Maize).